Here is a 309-residue protein sequence, read N- to C-terminus: Dicarboxylate carrier SLC25A8 (309 aa).

Residues 1–16 (MVGFKATDVPPTATVK) are Mitochondrial intermembrane-facing. 3 Solcar repeats span residues 11–106 (PTAT…VKQF), 114–203 (ASIG…IKDA), and 212–297 (DDLP…LKRA). Residues 16-63 (KFLGAGTAACIADLITFPLDTAKVRLQIQGESQGPVRATASAQYRGVM) are important for interaction with long-chain fatty acids. A helical transmembrane segment spans residues 17-40 (FLGAGTAACIADLITFPLDTAKVR). Topologically, residues 41 to 77 (LQIQGESQGPVRATASAQYRGVMGTILTMVRTEGPRS) are mitochondrial matrix. Residues 78–103 (LYNGLVAGLQRQMSFASVRIGLYDSV) traverse the membrane as a helical segment. The Mitochondrial intermembrane portion of the chain corresponds to 104–119 (KQFYTKGSEHASIGSR). The chain crosses the membrane as a helical span at residues 120-145 (LLAGSTTGALAVAVAQPTDVVKVRFQ). At 146 to 173 (AQARAGGGRRYQSTVNAYKTIAREEGFR) the chain is on the mitochondrial matrix side. The helical transmembrane segment at 174 to 199 (GLWKGTSPNVARNAIVNCAELVTYDL) threads the bilayer. At 200–217 (IKDALLKANLMTDDLPCH) the chain is on the mitochondrial intermembrane side. Residues 218–242 (FTSAFGAGFCTTVIASPVDVVKTRY) traverse the membrane as a helical segment. The Mitochondrial matrix segment spans residues 243–268 (MNSALGQYSSAGHCALTMLQKEGPRA). The chain crosses the membrane as a helical span at residues 269–294 (FYKGFMPSFLRLGSWNVVMFVTYEQL). Residues 278–285 (LRLGSWNV) form an important for interaction with long-chain fatty acids region. Residues 295-309 (KRALMAACTSREAPF) lie on the Mitochondrial intermembrane side of the membrane.

This sequence belongs to the mitochondrial carrier (TC 2.A.29) family. Homotetramer. Adopts an asymmetrical dimer of dimers functional form. As to expression, widely expressed in adult human tissues, including tissues rich in macrophages. Most expressed in white adipose tissue and skeletal muscle.

The protein resides in the mitochondrion inner membrane. The enzyme catalyses L-aspartate(out) + phosphate(in) + H(+)(in) = L-aspartate(in) + phosphate(out) + H(+)(out). It carries out the reaction oxaloacetate(out) + phosphate(in) + H(+)(in) = oxaloacetate(in) + phosphate(out) + H(+)(out). The catalysed reaction is (S)-malate(out) + phosphate(in) + H(+)(in) = (S)-malate(in) + phosphate(out) + H(+)(out). It catalyses the reaction malonate(out) + phosphate(in) + H(+)(in) = malonate(in) + phosphate(out) + H(+)(out). The enzyme catalyses sulfate(out) + phosphate(in) + H(+)(in) = sulfate(in) + phosphate(out) + H(+)(out). It carries out the reaction (S)-malate(out) = (S)-malate(in). The catalysed reaction is L-aspartate(out) = L-aspartate(in). It catalyses the reaction phosphate(in) = phosphate(out). The enzyme catalyses chloride(in) = chloride(out). It carries out the reaction H(+)(in) = H(+)(out). The catalysed reaction is a long-chain fatty acid(out) = a long-chain fatty acid(in). Inhibited by pyridoxal- 5'-phosphate, bathophenanthroline, tannic acid, bromocresol purple, butylmalonate and phenylsuccinate. Proton conductance is activated by cardiolipin and long-chain free fatty acids and inhibited by purine nucleotides ATP and ADP. Chloride ion transporter activity is inhibited by long-chain free fatty acids. Antiporter that exports dicarboxylate intermediates of the Krebs cycle in exchange for phosphate plus a proton across the inner membrane of mitochondria, a process driven by mitochondrial motive force with an overall impact on glycolysis, glutaminolysis and glutathione-dependent redox balance. Continuous export of oxaloacetate and related four-carbon dicarboxylates from mitochondrial matrix into the cytosol negatively regulates the oxidation of acetyl-CoA substrates via the Krebs cycle, lowering the ATP/ADP ratio and reactive oxygen species (ROS) production. May mediate inducible proton entry into the mitochondrial matrix affecting ATP turnover as a protection mechanism against oxidative stress. The proton currents are most likely associated with fatty acid flipping across the inner membrane of mitochondria in a metabolic process regulated by free fatty acids and purine nucleotides. Regulates the use of glucose as a source of energy. Required for glucose-induced DRP1-dependent mitochondrial fission and neuron activation in the ventromedial nucleus of the hypothalamus (VMH). This mitochondrial adaptation mechanism modulates the VMH pool of glucose-excited neurons with an impact on systemic glucose homeostasis. Regulates ROS levels and metabolic reprogramming of macrophages during the resolution phase of inflammation. Attenuates ROS production in response to IL33 to preserve the integrity of the Krebs cycle required for persistent production of itaconate and subsequent GATA3-dependent differentiation of inflammation-resolving alternatively activated macrophages. Can unidirectionally transport anions including L-malate, L-aspartate, phosphate and chloride ions. Does not mediate adaptive thermogenesis. This Homo sapiens (Human) protein is Dicarboxylate carrier SLC25A8 (UCP2).